Here is a 37-residue protein sequence, read N- to C-terminus: MKVRASVKTICRNCKVIRRNGVVRVICKDPRHKQRQG.

This sequence belongs to the bacterial ribosomal protein bL36 family.

This is Large ribosomal subunit protein bL36 from Thioalkalivibrio sulfidiphilus (strain HL-EbGR7).